The chain runs to 484 residues: Cobyric acid synthase (484 aa).

Residues A251–Y438 enclose the GATase cobBQ-type domain. The active-site Nucleophile is the C333. H430 is a catalytic residue.

The protein belongs to the CobB/CobQ family. CobQ subfamily.

Its pathway is cofactor biosynthesis; adenosylcobalamin biosynthesis. Functionally, catalyzes amidations at positions B, D, E, and G on adenosylcobyrinic A,C-diamide. NH(2) groups are provided by glutamine, and one molecule of ATP is hydrogenolyzed for each amidation. The polypeptide is Cobyric acid synthase (Allorhizobium ampelinum (strain ATCC BAA-846 / DSM 112012 / S4) (Agrobacterium vitis (strain S4))).